The chain runs to 729 residues: 1,4-alpha-glucan branching enzyme GlgB 2 (729 aa).

Asp-408 acts as the Nucleophile in catalysis. Residue Glu-461 is the Proton donor of the active site.

This sequence belongs to the glycosyl hydrolase 13 family. GlgB subfamily. As to quaternary structure, monomer.

It carries out the reaction Transfers a segment of a (1-&gt;4)-alpha-D-glucan chain to a primary hydroxy group in a similar glucan chain.. The protein operates within glycan biosynthesis; glycogen biosynthesis. Its function is as follows. Catalyzes the formation of the alpha-1,6-glucosidic linkages in glycogen by scission of a 1,4-alpha-linked oligosaccharide from growing alpha-1,4-glucan chains and the subsequent attachment of the oligosaccharide to the alpha-1,6 position. The chain is 1,4-alpha-glucan branching enzyme GlgB 2 from Xanthomonas campestris pv. campestris (strain 8004).